The primary structure comprises 503 residues: Trehalose-6-phosphate synthase (503 aa).

Arg22 contacts D-glucose 6-phosphate. A UDP-alpha-D-glucose-binding site is contributed by 42 to 43 (GG). D-glucose 6-phosphate contacts are provided by Tyr94 and Asp148. UDP-alpha-D-glucose-binding residues include Arg290 and Lys295. Residue Arg328 coordinates D-glucose 6-phosphate. 393–397 (LVAKE) contacts UDP-alpha-D-glucose. The tract at residues 481–503 (GETGDSGVTGESTPAPESDSGSF) is disordered.

It belongs to the glycosyltransferase 20 family. In terms of assembly, homotetramer.

The catalysed reaction is ADP-alpha-D-glucose + D-glucose 6-phosphate = alpha,alpha-trehalose 6-phosphate + ADP + H(+). It catalyses the reaction CDP-alpha-D-glucose + D-glucose 6-phosphate = alpha,alpha-trehalose 6-phosphate + CDP + H(+). The enzyme catalyses GDP-alpha-D-glucose + D-glucose 6-phosphate = alpha,alpha-trehalose 6-phosphate + GDP + H(+). It carries out the reaction TDP-alpha-D-glucose + D-glucose 6-phosphate = 5-methyl-UDP + alpha,alpha-trehalose 6-phosphate + H(+). The catalysed reaction is D-glucose 6-phosphate + UDP-alpha-D-glucose = alpha,alpha-trehalose 6-phosphate + UDP + H(+). Its pathway is glycan biosynthesis; trehalose biosynthesis. Its activity is regulated as follows. Stimulated by the polynucleotide FII (physiological activator), and by chondroitin sulfate (CS) and heparin. Activation by the polyanion is inhibited by high salt concentration as well as by high concentrations of mononucleoside phosphates. Functionally, involved in the production of glycogen and alpha-glucan via the TreS-Pep2 branch involved in the biosynthesis of maltose-1-phosphate (M1P), and probably in the osmoprotection via the biosynthesis of trehalose. Catalyzes the transfer of glucose from UDP-glucose (UDP-Glc) to glucose-6-phosphate (Glc-6-P) to form trehalose-6-phosphate. ADP-Glc, CDP-Glc, GDP-Glc and TDP-Glc are also glucosyl donors, however, when the pyrimidine sugar nucleotides (CDP-Glc, TDP-Glc and UDP-Glc) are used as substrates, there is an absolute requirement for a high molecular weight polyanion for activity. The sequence is that of Trehalose-6-phosphate synthase from Mycolicibacterium smegmatis (strain ATCC 700084 / mc(2)155) (Mycobacterium smegmatis).